The sequence spans 111 residues: BET1-like protein (111 aa).

The Cytoplasmic portion of the chain corresponds to 1–86 (MADWTRAQSS…VARSGRDTRK (86 aa)). A phosphoserine mark is found at S9 and S37. The region spanning 15 to 77 (EIVDRENKRM…TGSVKRFSTV (63 aa)) is the t-SNARE coiled-coil homology domain. A helical; Anchor for type IV membrane protein transmembrane segment spans residues 87 to 107 (LLCGMAVVLIVAFFILSYLFS). The Vesicular portion of the chain corresponds to 108 to 111 (RTRT).

In terms of assembly, component of a SNARE complex consisting of STX5, YKT6, GOSR1 and BET1L. Interacts with STX5. As to expression, widely expressed. Highest levels in heart, liver, skeletal muscle and kidney.

It is found in the golgi apparatus membrane. It localises to the golgi apparatus. The protein resides in the trans-Golgi network membrane. Its function is as follows. Vesicle SNARE required for targeting and fusion of retrograde transport vesicles with the Golgi complex. Required for the integrity of the Golgi complex. The polypeptide is BET1-like protein (Rattus norvegicus (Rat)).